The sequence spans 558 residues: D-xylose-proton symporter-like 3, chloroplastic (558 aa).

The transit peptide at 1 to 31 (MAFAVSVQSHFAIRALKRDHFKNPSPRTFCS) directs the protein to the chloroplast. 12 helical membrane-spanning segments follow: residues 98–118 (VILPFIFPALGGLLFGYDIGA), 146–166 (LVVSGSLYGALLGSISVYGVA), 175–195 (LIIAAVLYLLGSLITGCAPDL), 197–217 (ILLVGRLLYGFGIGLAMHGAP), 238–258 (LFIVLGILLGFSVGSFQIDVV), 264–284 (MYGFGTPVALLMGLGMWSLPA), 359–379 (ALTIGGGLVLFQQITGQPSVL), 400–420 (VSVIIGVFKLLMTWVAVAKVD), 426–446 (PLLIGGVSGIALSLFLLSAYY), 449–469 (LGGFPLVAVGALLLYVGCYQI), 491–511 (GISLAVLTNFGSNAIVTFAFS), and 522–542 (LFLLFGGIALVSLLFVILVVP).

Belongs to the major facilitator superfamily. Sugar transporter (TC 2.A.1.1) family.

It localises to the plastid. The protein localises to the chloroplast membrane. The protein is D-xylose-proton symporter-like 3, chloroplastic of Arabidopsis thaliana (Mouse-ear cress).